The primary structure comprises 101 residues: Pro-corazonin (101 aa).

An N-terminal signal peptide occupies residues 1 to 19; that stretch reads MVTNITLILTLMTLASVTA. At Q20 the chain carries Pyrrolidone carboxylic acid. N30 carries the post-translational modification Asparagine amide.

The protein belongs to the corazonin family.

The protein localises to the secreted. Cardioactive peptide. Corazonin is probably involved in the physiological regulation of the heart beat. The chain is Pro-corazonin (crz) from Bombyx mori (Silk moth).